Here is a 517-residue protein sequence, read N- to C-terminus: AAA ATPase forming ring-shaped complexes (517 aa).

Residues 25–53 adopt a coiled-coil conformation; sequence ARNAKLVELLQASRTKLEEINGRLEALAE. Residue 233–238 participates in ATP binding; it reads GNGKTL.

The protein belongs to the AAA ATPase family. In terms of assembly, homohexamer. Assembles into a hexameric ring structure.

This Corynebacterium jeikeium (strain K411) protein is AAA ATPase forming ring-shaped complexes.